Reading from the N-terminus, the 276-residue chain is Elongation factor Ts (276 aa).

The tract at residues 80–83 (TDFV) is involved in Mg(2+) ion dislocation from EF-Tu.

The protein belongs to the EF-Ts family.

The protein localises to the cytoplasm. Functionally, associates with the EF-Tu.GDP complex and induces the exchange of GDP to GTP. It remains bound to the aminoacyl-tRNA.EF-Tu.GTP complex up to the GTP hydrolysis stage on the ribosome. The chain is Elongation factor Ts from Acidothermus cellulolyticus (strain ATCC 43068 / DSM 8971 / 11B).